Consider the following 579-residue polypeptide: Folliculin (579 aa).

The tract at residues 32–52 (GASCGDSIGQGEQAEDEEMGI) is disordered. In terms of domain architecture, uDENN FLCN/SMCR8-type spans 86-242 (RSLAAGHPGY…RNGNAARSLT (157 aa)). One can recognise a cDENN FLCN/SMCR8-type domain in the interval 337-491 (NMVQRRMGVF…ILNKIEAALS (155 aa)). The region spanning 493 to 558 (ENLSMDVVDQ…LLKFWMTGLS (66 aa)) is the dDENN FLCN/SMCR8-type domain.

Belongs to the folliculin family. Component of the lysosomal folliculin complex (LFC).

Its subcellular location is the lysosome membrane. It is found in the cytoplasm. The protein resides in the cytosol. It localises to the cell projection. The protein localises to the cilium. Its subcellular location is the cytoskeleton. It is found in the microtubule organizing center. The protein resides in the centrosome. It localises to the spindle. The protein localises to the nucleus. Its activity is regulated as follows. GTPase-activating activity is inhibited in the folliculin complex (LFC), which stabilizes the GDP-bound state of RagA/RRAGA (or RagB/RRAGB), because Arg-164 is located far from the RagC/RRAGC or RagD/RRAGD nucleotide pocket. Disassembly of the LFC complex upon amino acid restimulation liberates the GTPase-activating activity. In terms of biological role, multi-functional protein, involved in both the cellular response to amino acid availability and in the regulation of glycolysis. GTPase-activating protein that plays a key role in the cellular response to amino acid availability through regulation of the non-canonical mTORC1 signaling cascade controlling the MiT/TFE factors tfeb and tfe3. Activates mTORC1 by acting as a GTPase-activating protein: specifically stimulates GTP hydrolysis by RagC/RRAGC or RagD/RRAGD, promoting the conversion to the GDP-bound state of RagC/RRAGC or RagD/RRAGD, and thereby activating the kinase activity of mTORC1. The GTPase-activating activity is inhibited during starvation and activated in presence of nutrients. Acts as a key component for non-canonical mTORC1-dependent control of the MiT/TFE factors tfeb and tfe3, while it is not involved in mTORC1-dependent phosphorylation of canonical RPS6KB1/S6K1 and EIF4EBP1/4E-BP1. In low-amino acid conditions, the lysosomal folliculin complex (LFC) is formed on the membrane of lysosomes, which inhibits the GTPase-activating activity of flcn, inactivates mTORC1 and maximizes nuclear translocation of tfeb and tfe3. Upon amino acid restimulation, RagA/RRAGA (or RagB/RRAGB) nucleotide exchange promotes disassembly of the LFC complex and liberates the GTPase-activating activity of flcn, leading to activation of mTORC1 and subsequent cytoplasmic retention of tfeb and tfe3. Required for the exit of hematopoietic stem cell from pluripotency by promoting mTOR-dependent cytoplasmic retention of tfe3, thereby increasing Wnt signaling. Acts as an inhibitor of browning of adipose tissue by regulating mTOR-dependent cytoplasmic retention of tfe3. In response to flow stress, regulates STK11/LKB1 accumulation and mTORC1 activation through primary cilia. Required for starvation-induced perinuclear clustering of lysosomes by promoting association of rilp with its effector rab34. Involved in the control of embryonic stem cells differentiation; together with lamtor1 it is necessary to recruit and activate RagC/RRAGC and RagD/RRAGD at the lysosomes, and to induce exit of embryonic stem cells from pluripotency via non-canonical, mTOR-independent tfe3 inactivation. Regulates glycolysis by binding to lactate dehydrogenase ldha, acting as an uncompetitive inhibitor. The protein is Folliculin of Xenopus tropicalis (Western clawed frog).